The following is a 78-amino-acid chain: Translation initiation factor IF-1, chloroplastic (78 aa).

An S1-like domain is found at 1 to 73 (MASNRELIEM…TKGRIIYRLR (73 aa)).

The protein belongs to the IF-1 family. In terms of assembly, component of the 30S ribosomal translation pre-initiation complex which assembles on the 30S ribosome in the order IF-2 and IF-3, IF-1 and N-formylmethionyl-tRNA(fMet); mRNA recruitment can occur at any time during PIC assembly.

The protein resides in the plastid. It localises to the chloroplast. Its function is as follows. One of the essential components for the initiation of protein synthesis. Stabilizes the binding of IF-2 and IF-3 on the 30S subunit to which N-formylmethionyl-tRNA(fMet) subsequently binds. Helps modulate mRNA selection, yielding the 30S pre-initiation complex (PIC). Upon addition of the 50S ribosomal subunit IF-1, IF-2 and IF-3 are released leaving the mature 70S translation initiation complex. This is Translation initiation factor IF-1, chloroplastic from Ostreococcus tauri.